A 545-amino-acid chain; its full sequence is CTP synthase (545 aa).

The amidoligase domain stretch occupies residues Met1 to Leu266. Ser14 is a CTP binding site. Ser14 contacts UTP. Residues Ser15 to Ile20 and Asp72 each bind ATP. Mg(2+) contacts are provided by Asp72 and Glu140. CTP contacts are provided by residues Asp147 to Glu149, Lys187 to Gln192, and Lys223. UTP-binding positions include Lys187–Gln192 and Lys223. An ATP-binding site is contributed by Lys239 to Val241. In terms of domain architecture, Glutamine amidotransferase type-1 spans Val291–Asn543. Gly352 serves as a coordination point for L-glutamine. Cys379 (nucleophile; for glutamine hydrolysis) is an active-site residue. L-glutamine contacts are provided by residues Leu380–Gln383, Glu403, and Arg471. Residues His516 and Glu518 contribute to the active site.

This sequence belongs to the CTP synthase family. In terms of assembly, homotetramer.

The enzyme catalyses UTP + L-glutamine + ATP + H2O = CTP + L-glutamate + ADP + phosphate + 2 H(+). It carries out the reaction L-glutamine + H2O = L-glutamate + NH4(+). It catalyses the reaction UTP + NH4(+) + ATP = CTP + ADP + phosphate + 2 H(+). The protein operates within pyrimidine metabolism; CTP biosynthesis via de novo pathway; CTP from UDP: step 2/2. Allosterically activated by GTP, when glutamine is the substrate; GTP has no effect on the reaction when ammonia is the substrate. The allosteric effector GTP functions by stabilizing the protein conformation that binds the tetrahedral intermediate(s) formed during glutamine hydrolysis. Inhibited by the product CTP, via allosteric rather than competitive inhibition. In terms of biological role, catalyzes the ATP-dependent amination of UTP to CTP with either L-glutamine or ammonia as the source of nitrogen. Regulates intracellular CTP levels through interactions with the four ribonucleotide triphosphates. The sequence is that of CTP synthase from Buchnera aphidicola subsp. Acyrthosiphon pisum (strain 5A).